We begin with the raw amino-acid sequence, 137 residues long: Small ribosomal subunit protein uS12 (137 aa).

The tract at residues 1–57 (MPTINQLVRKPRKSKTKQSDSPVLNRGFNSKKKQFTNLNSPQKRGVCTRVGTMTPRK) is disordered. Residue aspartate 102 is modified to 3-methylthioaspartic acid. Residues 118–137 (SGVDGRRQGRSLYGTKKPKN) form a disordered region.

Belongs to the universal ribosomal protein uS12 family. In terms of assembly, part of the 30S ribosomal subunit. Contacts proteins S8 and S17. May interact with IF1 in the 30S initiation complex.

Functionally, with S4 and S5 plays an important role in translational accuracy. Interacts with and stabilizes bases of the 16S rRNA that are involved in tRNA selection in the A site and with the mRNA backbone. Located at the interface of the 30S and 50S subunits, it traverses the body of the 30S subunit contacting proteins on the other side and probably holding the rRNA structure together. The combined cluster of proteins S8, S12 and S17 appears to hold together the shoulder and platform of the 30S subunit. The protein is Small ribosomal subunit protein uS12 of Staphylococcus epidermidis (strain ATCC 12228 / FDA PCI 1200).